We begin with the raw amino-acid sequence, 601 residues long: Elongation factor 4 (601 aa).

Residues 5–187 (ENIRNFCIIA…AIVHHLPAPK (183 aa)) form the tr-type G domain. GTP contacts are provided by residues 17-22 (DHGKST) and 134-137 (NKID).

This sequence belongs to the TRAFAC class translation factor GTPase superfamily. Classic translation factor GTPase family. LepA subfamily.

The protein localises to the cell inner membrane. It catalyses the reaction GTP + H2O = GDP + phosphate + H(+). Functionally, required for accurate and efficient protein synthesis under certain stress conditions. May act as a fidelity factor of the translation reaction, by catalyzing a one-codon backward translocation of tRNAs on improperly translocated ribosomes. Back-translocation proceeds from a post-translocation (POST) complex to a pre-translocation (PRE) complex, thus giving elongation factor G a second chance to translocate the tRNAs correctly. Binds to ribosomes in a GTP-dependent manner. This is Elongation factor 4 from Desulfovibrio desulfuricans (strain ATCC 27774 / DSM 6949 / MB).